Consider the following 330-residue polypeptide: Delta-aminolevulinic acid dehydratase (330 aa).

Zn(2+)-binding residues include Cys122, Cys124, His131, and Cys132. The active-site Schiff-base intermediate with substrate is Lys199. Lys199 is subject to N6-succinyllysine. Residue Arg209 participates in 5-aminolevulinate binding. Ser215 is subject to Phosphoserine. Residue Arg221 coordinates 5-aminolevulinate. Residue Cys223 participates in Zn(2+) binding. Lys252 (schiff-base intermediate with substrate) is an active-site residue. Lys252 is modified (N6-succinyllysine). Ser279 contributes to the 5-aminolevulinate binding site.

The protein belongs to the ALAD family. In terms of assembly, homooctamer; active form. Homohexamer; low activity form. The cofactor is Zn(2+).

Its subcellular location is the cytoplasm. The protein resides in the cytosol. It carries out the reaction 2 5-aminolevulinate = porphobilinogen + 2 H2O + H(+). Its pathway is porphyrin-containing compound metabolism; protoporphyrin-IX biosynthesis; coproporphyrinogen-III from 5-aminolevulinate: step 1/4. Its activity is regulated as follows. Can alternate between a fully active homooctamer and a low-activity homohexamer. A bound magnesium ion may promote the assembly of the fully active homooctamer. The magnesium-binding site is absent in the low-activity homohexamer. Inhibited by compounds that favor the hexameric state. Inhibited by divalent lead ions. The lead ions partially displace the zinc cofactor. Catalyzes an early step in the biosynthesis of tetrapyrroles. Binds two molecules of 5-aminolevulinate per subunit, each at a distinct site, and catalyzes their condensation to form porphobilinogen. The chain is Delta-aminolevulinic acid dehydratase (ALAD) from Pongo abelii (Sumatran orangutan).